Here is a 767-residue protein sequence, read N- to C-terminus: Receptor-type tyrosine-protein phosphatase-like ida-1 (767 aa).

Positions 1 to 19 (MRFFHSIIVLLFSISTGSA) are cleaved as a signal peptide. Over 20-398 (FLLYGCNLSE…SLPVESSERD (379 aa)) the chain is Lumenal. Residues N26 and N146 are each glycosylated (N-linked (GlcNAc...) asparagine). Residues 399-419 (WLLMPVLFVCAFTVTALGLVA) form a helical membrane-spanning segment. Over 420–767 (AVQIARSRRH…NHLLKSIATK (348 aa)) the chain is Cytoplasmic. The Tyrosine-protein phosphatase domain maps to 527–756 (SQNRTILPFD…KLVYGCVAQE (230 aa)).

The protein belongs to the protein-tyrosine phosphatase family. Receptor class 8 subfamily. Post-translationally, proteolytically cleaved probably at a dibasic consensus sequence by egl-3. As to expression, in hermaphrodites specifically expressed in neurons and in particular in the head nerve ring (ADE, ALA, ASI, ASK, AUA, ASG, AVH and AVJ neurons), in the ventral nerve cord, pre-anal ganglia (PVP neuron), in the tail (PHA, PHB and PHC neurons) and in vulval motor neurons VC and HSN and the vulval uv1 cells. In males, also expressed in neurons anterior to the nerve ring and male-specific neurons in the tail.

It localises to the cytoplasmic vesicle membrane. The protein resides in the perikaryon. The protein localises to the cell projection. Its subcellular location is the axon. It is found in the dendrite. In terms of biological role, regulates dense-core vesicle (DCV) trafficking and/or secretion. Probably by controlling DCV trafficking, plays a role in the AVG neuron-mediated formation of the right axon tract of the ventral nerve cord. Involved in locomotion by regulating acetylcholine release. Probably by controlling the secretion of FLP neuropeptides, regulates the turning step of male mating behavior. Plays a role in preventing dauer formation. The protein is Receptor-type tyrosine-protein phosphatase-like ida-1 of Caenorhabditis elegans.